A 583-amino-acid chain; its full sequence is Aspartate--tRNA ligase (583 aa).

Glutamate 169 contributes to the L-aspartate binding site. Residues 193 to 196 (QLFK) are aspartate. Arginine 215 contacts L-aspartate. Residues 215-217 (RDE) and glutamine 224 each bind ATP. Residue histidine 443 participates in L-aspartate binding. Residue glutamate 477 coordinates ATP. Residue arginine 484 participates in L-aspartate binding. 529–532 (GIDR) is an ATP binding site.

This sequence belongs to the class-II aminoacyl-tRNA synthetase family. Type 1 subfamily. In terms of assembly, homodimer.

It is found in the cytoplasm. The enzyme catalyses tRNA(Asp) + L-aspartate + ATP = L-aspartyl-tRNA(Asp) + AMP + diphosphate. Catalyzes the attachment of L-aspartate to tRNA(Asp) in a two-step reaction: L-aspartate is first activated by ATP to form Asp-AMP and then transferred to the acceptor end of tRNA(Asp). The sequence is that of Aspartate--tRNA ligase from Stenotrophomonas maltophilia (strain R551-3).